The chain runs to 394 residues: Anthocyanidin 3-O-glucosyltransferase 6 (394 aa).

Residue D37 is the Charge relay of the active site. Residues T59, A267, Q269, H284, W287, N288, S289, and E292 each coordinate UDP-alpha-D-glucose. A307 is a binding site for an anthocyanidin. Residues E308 and Q309 each contribute to the UDP-alpha-D-glucose site.

Belongs to the UDP-glycosyltransferase family. As to expression, expressed in cotyledons and leaves.

The catalysed reaction is an anthocyanidin + UDP-alpha-D-glucose + H(+) = an anthocyanidin 3-O-beta-D-glucoside + UDP. The protein operates within pigment biosynthesis; anthocyanin biosynthesis. Functionally, in the presence of other necessary color factors, this glycosylation reaction allows the accumulation of anthocyanin pigments. May be involved in glycosylation of unstable cyanohydrins to produce stable cyanoglucosides. This Manihot esculenta (Cassava) protein is Anthocyanidin 3-O-glucosyltransferase 6 (GT6).